A 277-amino-acid chain; its full sequence is 2,3,4,5-tetrahydropyridine-2,6-dicarboxylate N-succinyltransferase (277 aa).

Positions 106 and 143 each coordinate substrate.

The protein belongs to the transferase hexapeptide repeat family. As to quaternary structure, homotrimer.

The protein localises to the cytoplasm. It catalyses the reaction (S)-2,3,4,5-tetrahydrodipicolinate + succinyl-CoA + H2O = (S)-2-succinylamino-6-oxoheptanedioate + CoA. It participates in amino-acid biosynthesis; L-lysine biosynthesis via DAP pathway; LL-2,6-diaminopimelate from (S)-tetrahydrodipicolinate (succinylase route): step 1/3. This Variovorax paradoxus (strain S110) protein is 2,3,4,5-tetrahydropyridine-2,6-dicarboxylate N-succinyltransferase.